Consider the following 129-residue polypeptide: Chorion class A protein L11 (129 aa).

The N-terminal stretch at 1–21 (MSTFAFLLLCVQACLIQNVYG) is a signal peptide. The tract at residues 22–64 (QCLGRGLGGCGCGGGLGGYGLGYGLGGYGGGYGYGGYGGGYYG) is left arm. A central domain region spans residues 65–112 (GYGGEGVGNVGVAGVLPVGGVTAVGGRVPIIGGVEFGGPACAGGCVSI). A right arm region spans residues 113 to 129 (CGHCAPTCGCGYGGLYY).

It belongs to the chorion protein family.

Its function is as follows. This protein is one of many from the eggshell of the silk moth. The protein is Chorion class A protein L11 of Bombyx mori (Silk moth).